The primary structure comprises 342 residues: Autoinducer 2 import system permease protein LsrC (342 aa).

Residues 1 to 13 (MLKFIQNNREITA) lie on the Periplasmic side of the membrane. The helical transmembrane segment at 14-34 (LLAVVLLFVLPGFLDRQYLSV) threads the bilayer. Topologically, residues 35–38 (QTLT) are cytoplasmic. The helical transmembrane segment at 39–59 (MVYSSAQILILLAMGATLVML) threads the bilayer. The Periplasmic segment spans residues 60–69 (TRNIDVSVGS). A helical transmembrane segment spans residues 70–90 (ITGMCAVLLGMLLNAGYSLPV). Over 91 to 92 (AC) the chain is Cytoplasmic. Residues 93–113 (VATLLLGLLAGFFNGVLVAWL) form a helical membrane-spanning segment. Lysine 114 is a topological domain (periplasmic). Residues 115-135 (IPAIVATLGTLGLYRGIMLLW) traverse the membrane as a helical segment. Over 136-154 (TGGKWIEGLPAELKQLSAP) the chain is Cytoplasmic. Residues 155-175 (LLLGVSAIGWLTIILVAFMAW) form a helical membrane-spanning segment. The Periplasmic segment spans residues 176 to 212 (LLAKTAFGRSFYATGDNLQGARQLGVRTEAIRIVAFS). Residues 213 to 233 (LNGCMAALAGIVFASQIGFIP) form a helical membrane-spanning segment. The Cytoplasmic segment spans residues 234 to 251 (NQTGTGLEMKAIAACVLG). A helical membrane pass occupies residues 252–272 (GISLLGGSGAIIGAVLGAWFL). Residues 273–283 (TQIDSVLVLLR) are Periplasmic-facing. Residues 284-304 (IPAWWNDFIAGLVLLAVLVFD) form a helical membrane-spanning segment. Residues 305–342 (GRLRCALERNLRRQKYARFMTPPPSVKPASSGKKREAA) lie on the Cytoplasmic side of the membrane.

This sequence belongs to the binding-protein-dependent transport system permease family. AraH/RbsC subfamily. As to quaternary structure, the complex is composed of two ATP-binding proteins (LsrA), two transmembrane proteins (LsrC and LsrD) and a solute-binding protein (LsrB).

The protein localises to the cell inner membrane. In terms of biological role, part of the ABC transporter complex LsrABCD involved in autoinducer 2 (AI-2) import. Probably responsible for the translocation of the substrate across the membrane. This is Autoinducer 2 import system permease protein LsrC (lsrC) from Escherichia coli (strain K12 / DH10B).